Reading from the N-terminus, the 129-residue chain is Follitropin subunit beta (129 aa).

The signal sequence occupies residues 1–20 (MKTAQFYIFFFCWKAIWCNG). Cystine bridges form between cysteine 21-cysteine 69, cysteine 35-cysteine 84, cysteine 38-cysteine 122, cysteine 46-cysteine 100, cysteine 50-cysteine 102, and cysteine 105-cysteine 112. 2 N-linked (GlcNAc...) asparagine glycosylation sites follow: asparagine 25 and asparagine 42.

Belongs to the glycoprotein hormones subunit beta family. Heterodimer. The active follitropin is a heterodimer composed of an alpha chain/CGA shared with other hormones and a unique beta chain/FSHB shown here.

It localises to the secreted. In terms of biological role, together with the alpha chain CGA constitutes follitropin, the follicle-stimulating hormone, and provides its biological specificity to the hormone heterodimer. Binds FSHR, a G protein-coupled receptor, on target cells to activate downstream signaling pathways. Follitropin is involved in follicle development and spermatogenesis in reproductive organs. In Monodelphis domestica (Gray short-tailed opossum), this protein is Follitropin subunit beta (FSHB).